The sequence spans 357 residues: Serine proteinase inhibitor 1 (357 aa).

Belongs to the serpin family. Poxviruses subfamily.

Its subcellular location is the host cytoplasm. This viral protein may be involved in the regulation of the complement cascade. Involved in red pock formation. The chain is Serine proteinase inhibitor 1 (SPI-1) from Oryctolagus cuniculus (Rabbit).